Here is a 771-residue protein sequence, read N- to C-terminus: U-box domain-containing protein 6 (771 aa).

The U-box domain maps to 274–348 (IPPEELRCPI…ASWCEQNGIT (75 aa)). Positions 394-415 (EESSTIESERQQKEKNNAPDEV) are disordered. The span at 400-411 (ESERQQKEKNNA) shows a compositional bias: basic and acidic residues. ARM repeat units lie at residues 456–499 (EEAR…NLAV), 502–542 (NRNK…CLEK), 544–581 (KPVI…NLST), 583–622 (SPNI…NLAS), and 625–664 (EGKE…ILCT). Positions 706 to 722 (EQRHRDQPSPNKEEAPR) are enriched in basic and acidic residues. Residues 706–751 (EQRHRDQPSPNKEEAPRKTVSAPMAIPAPVSAPESEVKPLTKSISR) form a disordered region.

The catalysed reaction is S-ubiquitinyl-[E2 ubiquitin-conjugating enzyme]-L-cysteine + [acceptor protein]-L-lysine = [E2 ubiquitin-conjugating enzyme]-L-cysteine + N(6)-ubiquitinyl-[acceptor protein]-L-lysine.. It functions in the pathway protein modification; protein ubiquitination. Functions as an E3 ubiquitin ligase. The sequence is that of U-box domain-containing protein 6 (PUB6) from Arabidopsis thaliana (Mouse-ear cress).